A 363-amino-acid polypeptide reads, in one-letter code: Anhydro-N-acetylmuramic acid kinase (363 aa).

Residue 9–16 (GTSLDGID) participates in ATP binding.

The protein belongs to the anhydro-N-acetylmuramic acid kinase family.

It catalyses the reaction 1,6-anhydro-N-acetyl-beta-muramate + ATP + H2O = N-acetyl-D-muramate 6-phosphate + ADP + H(+). It functions in the pathway amino-sugar metabolism; 1,6-anhydro-N-acetylmuramate degradation. The protein operates within cell wall biogenesis; peptidoglycan recycling. Functionally, catalyzes the specific phosphorylation of 1,6-anhydro-N-acetylmuramic acid (anhMurNAc) with the simultaneous cleavage of the 1,6-anhydro ring, generating MurNAc-6-P. Is required for the utilization of anhMurNAc either imported from the medium or derived from its own cell wall murein, and thus plays a role in cell wall recycling. This Nitrosomonas europaea (strain ATCC 19718 / CIP 103999 / KCTC 2705 / NBRC 14298) protein is Anhydro-N-acetylmuramic acid kinase.